A 201-amino-acid chain; its full sequence is Large ribosomal subunit protein uL18 (201 aa).

This sequence belongs to the universal ribosomal protein uL18 family. Part of the 50S ribosomal subunit. Contacts the 5S and 23S rRNAs.

In terms of biological role, this is one of the proteins that bind and probably mediate the attachment of the 5S RNA into the large ribosomal subunit, where it forms part of the central protuberance. This is Large ribosomal subunit protein uL18 from Thermococcus kodakarensis (strain ATCC BAA-918 / JCM 12380 / KOD1) (Pyrococcus kodakaraensis (strain KOD1)).